We begin with the raw amino-acid sequence, 493 residues long: MALFGALFLALLAGAHAEFPGCKIRVTSKALELVKQEGLRFLEQELETITIPDLRGKEGHFYYNISEVKVTELQLTSSELDFQPQQELMLQITNASLGLRFRRQLLYWFFYDGGYINASAEGVSIRTGLELSRDPAGRMKVSNVSCQASVSRMHAAFGGTFKKVYDFLSTFITSGMRFLLNQQICPVLYHAGTVLLNSLLDTVPVRSSVDELVGIDYSLMKDPVASTSNLDMDFRGAFFPLTERNWSLPNRAVEPQLQEEERMVYVAFSEFFFDSAMESYFRAGALQLLLVGDKVPHDLDMLLRATYFGSIVLLSPAVIDSPLKLELRVLAPPRCTIKPSGTTISVTASVTIALVPPDQPEVQLSSMTMDARLSAKMALRGKALRTQLDLRRFRIYSNHSALESLALIPLQAPLKTMLQIGVMPMLNERTWRGVQIPLPEGINFVHEVVTNHAGFLTIGADLHFAKGLREVIEKNRPADVRASTAPTPSTAAV.

The N-terminal stretch at 1–17 (MALFGALFLALLAGAHA) is a signal peptide. An N-linked (GlcNAc...) (complex) asparagine glycan is attached at N64. N-linked (GlcNAc...) asparagine glycosylation occurs at N94. An N-linked (GlcNAc...) (complex) asparagine glycan is attached at N117. Residue N143 is glycosylated (N-linked (GlcNAc...) asparagine). A disulfide bridge connects residues C146 and C185. N245 is a glycosylation site (N-linked (GlcNAc...) (complex) asparagine). N398 is a glycosylation site (N-linked (GlcNAc...) asparagine).

It belongs to the BPI/LBP/Plunc superfamily. BPI/LBP family. Glycosylation is necessary for secretion and its phospholipid transfer activity. In terms of tissue distribution, widely expressed. Highest level of expression in the ovary, thymus and placenta, with moderate levels found in the pancreas, small intestine, testis, lung and prostrate. Low level expression in the kidney, liver and spleen, with very low levels found in the heart, colon, skeletal muscle, leukocytes and brain. Expressed in the cortical neurons.

It localises to the secreted. Its subcellular location is the nucleus. It catalyses the reaction a 1,2-diacyl-sn-glycero-3-phosphocholine(in) = a 1,2-diacyl-sn-glycero-3-phosphocholine(out). The enzyme catalyses a 1,2-diacyl-sn-glycero-3-phosphoethanolamine(in) = a 1,2-diacyl-sn-glycero-3-phosphoethanolamine(out). The catalysed reaction is a 1,2-diacyl-sn-glycerol(in) = a 1,2-diacyl-sn-glycerol(out). It carries out the reaction a 1,2-diacyl-sn-glycero-3-phosphate(in) = a 1,2-diacyl-sn-glycero-3-phosphate(out). It catalyses the reaction a sphingomyelin(in) = a sphingomyelin(out). The enzyme catalyses a 1,2-diacyl-sn-glycero-3-phospho-(1'-sn-glycerol)(in) = a 1,2-diacyl-sn-glycero-3-phospho-(1'-sn-glycerol)(out). The catalysed reaction is a 1,2-diacyl-sn-glycero-3-phospho-(1D-myo-inositol)(in) = a 1,2-diacyl-sn-glycero-3-phospho-(1D-myo-inositol)(out). It carries out the reaction 1-hexadecanoyl-2-(5Z,8Z,11Z,14Z-eicosatetraenoyl)-sn-glycero-3-phosphoethanolamine(in) = 1-hexadecanoyl-2-(5Z,8Z,11Z,14Z-eicosatetraenoyl)-sn-glycero-3-phosphoethanolamine(out). It catalyses the reaction N-(hexadecanoyl)-sphing-4-enine-1-phosphocholine(in) = N-(hexadecanoyl)-sphing-4-enine-1-phosphocholine(out). The enzyme catalyses 1,2-dihexadecanoyl-sn-glycero-3-phosphocholine(in) = 1,2-dihexadecanoyl-sn-glycero-3-phosphocholine(out). Functionally, mediates the transfer of phospholipids and free cholesterol from triglyceride-rich lipoproteins (low density lipoproteins or LDL and very low density lipoproteins or VLDL) into high-density lipoproteins (HDL) as well as the exchange of phospholipids between triglyceride-rich lipoproteins themselves. Facilitates the transfer of a spectrum of different lipid molecules, including diacylglycerol, phosphatidic acid, sphingomyelin, phosphatidylcholine, phosphatidylinositol, phosphatidylglycerol, cerebroside and phosphatidyl ethanolamine. Plays an important role in HDL remodeling which involves modulating the size and composition of HDL. Also plays a key role in the uptake of cholesterol from peripheral cells and tissues that is subsequently transported to the liver for degradation and excretion. Two distinct forms of PLTP exist in plasma: an active form that can transfer phosphatidylcholine from phospholipid vesicles to HDL, and an inactive form that lacks this capability. This chain is Phospholipid transfer protein (PLTP), found in Homo sapiens (Human).